Consider the following 465-residue polypeptide: Glutamate--tRNA ligase 2 (465 aa).

The short motif at 8-18 is the 'HIGH' region element; the sequence is PSPTGLMHLGN. A 'KMSKS' region motif is present at residues 249–253; the sequence is PLSKR. Lys-252 provides a ligand contact to ATP.

This sequence belongs to the class-I aminoacyl-tRNA synthetase family. Glutamate--tRNA ligase type 1 subfamily. Monomer.

It is found in the cytoplasm. It catalyses the reaction tRNA(Glu) + L-glutamate + ATP = L-glutamyl-tRNA(Glu) + AMP + diphosphate. Catalyzes the attachment of glutamate to tRNA(Glu) in a two-step reaction: glutamate is first activated by ATP to form Glu-AMP and then transferred to the acceptor end of tRNA(Glu). The polypeptide is Glutamate--tRNA ligase 2 (Coxiella burnetii (strain CbuK_Q154) (Coxiella burnetii (strain Q154))).